We begin with the raw amino-acid sequence, 704 residues long: Urea-proton symporter DUR3 (704 aa).

A run of 15 helical transmembrane segments spans residues 39–59, 80–100, 115–135, 159–179, 192–212, 216–236, 291–311, 336–356, 388–408, 435–455, 461–481, 486–506, 527–547, 590–610, and 622–642; these read YAVI…LVWL, VKTG…ATIL, FWYA…AIEI, IVFL…LLLG, LYAA…AGGL, FLAS…FVFL, SSGG…TVFV, LVWF…ALAL, LTML…AVSS, AVLG…KAGV, YLAM…MLLW, AFGA…TWLT, LAGN…CSLV, AWIV…WPVL, and FWFW…VIIG.

Belongs to the sodium:solute symporter (SSF) (TC 2.A.21) family. Expressed in root rhizodermis, including root hairs and cortex in more basal root zones. Expressed in shoots.

Its subcellular location is the cell membrane. Functionally, high-affinity urea-proton symporter involved in the active transport of urea across the plasma membrane into root cells. May play an important role in urea uptake by plant cells at low external urea concentrations. The sequence is that of Urea-proton symporter DUR3 (DUR3) from Arabidopsis thaliana (Mouse-ear cress).